We begin with the raw amino-acid sequence, 453 residues long: Ribulose bisphosphate carboxylase large chain (453 aa).

Positions 1–2 (MS) are excised as a propeptide. P3 is subject to N-acetylproline. Position 14 is an N6,N6,N6-trimethyllysine (K14). The substrate site is built by N123 and T173. Catalysis depends on K175, which acts as the Proton acceptor. K177 lines the substrate pocket. 3 residues coordinate Mg(2+): K201, D203, and E204. K201 carries the post-translational modification N6-carboxylysine. Catalysis depends on H294, which acts as the Proton acceptor. R295, H327, and S379 together coordinate substrate.

The protein belongs to the RuBisCO large chain family. Type I subfamily. As to quaternary structure, heterohexadecamer of 8 large chains and 8 small chains; disulfide-linked. The disulfide link is formed within the large subunit homodimers. Mg(2+) serves as cofactor. Post-translationally, the disulfide bond which can form in the large chain dimeric partners within the hexadecamer appears to be associated with oxidative stress and protein turnover.

Its subcellular location is the plastid. The protein localises to the chloroplast. The enzyme catalyses 2 (2R)-3-phosphoglycerate + 2 H(+) = D-ribulose 1,5-bisphosphate + CO2 + H2O. It catalyses the reaction D-ribulose 1,5-bisphosphate + O2 = 2-phosphoglycolate + (2R)-3-phosphoglycerate + 2 H(+). Functionally, ruBisCO catalyzes two reactions: the carboxylation of D-ribulose 1,5-bisphosphate, the primary event in carbon dioxide fixation, as well as the oxidative fragmentation of the pentose substrate in the photorespiration process. Both reactions occur simultaneously and in competition at the same active site. This chain is Ribulose bisphosphate carboxylase large chain, found in Valantia muralis (Wall valantia).